The sequence spans 418 residues: Glutamyl-tRNA reductase (418 aa).

Substrate contacts are provided by residues 49 to 52, Ser-109, 114 to 116, and Gln-120; these read TCNR and EPQ. Residue Cys-50 is the Nucleophile of the active site. 189-194 lines the NADP(+) pocket; sequence GAGETI.

Belongs to the glutamyl-tRNA reductase family. Homodimer.

It catalyses the reaction (S)-4-amino-5-oxopentanoate + tRNA(Glu) + NADP(+) = L-glutamyl-tRNA(Glu) + NADPH + H(+). The protein operates within porphyrin-containing compound metabolism; protoporphyrin-IX biosynthesis; 5-aminolevulinate from L-glutamyl-tRNA(Glu): step 1/2. Functionally, catalyzes the NADPH-dependent reduction of glutamyl-tRNA(Glu) to glutamate 1-semialdehyde (GSA). In Klebsiella pneumoniae subsp. pneumoniae (strain ATCC 700721 / MGH 78578), this protein is Glutamyl-tRNA reductase.